The primary structure comprises 218 residues: Probable transaldolase (218 aa).

Lys87 functions as the Schiff-base intermediate with substrate in the catalytic mechanism.

Belongs to the transaldolase family. Type 3B subfamily.

It is found in the cytoplasm. It carries out the reaction D-sedoheptulose 7-phosphate + D-glyceraldehyde 3-phosphate = D-erythrose 4-phosphate + beta-D-fructose 6-phosphate. It functions in the pathway carbohydrate degradation; pentose phosphate pathway; D-glyceraldehyde 3-phosphate and beta-D-fructose 6-phosphate from D-ribose 5-phosphate and D-xylulose 5-phosphate (non-oxidative stage): step 2/3. Transaldolase is important for the balance of metabolites in the pentose-phosphate pathway. The protein is Probable transaldolase of Bacteroides fragilis (strain YCH46).